Consider the following 409-residue polypeptide: Putative protein disulfide-isomerase DDB_G0275025 (409 aa).

The first 21 residues, 1-21 (MKLINICIFIFAIICIESTFG), serve as a signal peptide directing secretion. The region spanning 28–140 (NVINLTKKNF…AKFSLAKLPS (113 aa)) is the Thioredoxin domain. Cysteines 57 and 60 form a disulfide. The segment at 245-273 (SNNDNNNNNNNNNNEESTKTTTTEKDPAS) is disordered. Positions 247 to 259 (NDNNNNNNNNNNE) are enriched in low complexity. Residues 260-273 (ESTKTTTTEKDPAS) show a composition bias toward basic and acidic residues. The short motif at 406–409 (KDEL) is the Prevents secretion from ER element.

This sequence belongs to the protein disulfide isomerase family.

It localises to the endoplasmic reticulum lumen. It carries out the reaction Catalyzes the rearrangement of -S-S- bonds in proteins.. The sequence is that of Putative protein disulfide-isomerase DDB_G0275025 from Dictyostelium discoideum (Social amoeba).